The primary structure comprises 119 residues: Large ribosomal subunit protein bL12 (119 aa).

It belongs to the bacterial ribosomal protein bL12 family. Homodimer. Part of the ribosomal stalk of the 50S ribosomal subunit. Forms a multimeric L10(L12)X complex, where L10 forms an elongated spine to which 2 to 4 L12 dimers bind in a sequential fashion. Binds GTP-bound translation factors.

Its function is as follows. Forms part of the ribosomal stalk which helps the ribosome interact with GTP-bound translation factors. Is thus essential for accurate translation. In Bacillus anthracis (strain A0248), this protein is Large ribosomal subunit protein bL12.